A 365-amino-acid polypeptide reads, in one-letter code: MHLNAIAISAFRNIDHVEISFDRRFNVLHGANGQGKTSVLEAIYLLGTMKSFRMAKAHDLIAWNAPHSLVRGDIDKAGVRREIALYLGREGRKARIDRKPVTKLADFFGAVNAVVFSPEEIGMARGGPELRRRYLDRAIFNGDLGYLLLHHEYHRLLKQRNALLRRGERDGLEVWTIQLAEAGARLMVKRRAYLSQIEPLVRQFYRDIAGAGQEVGLAYRCHGLASAEGERDCAAALRELMAAHEAEELRRGATGVGPHRDDVDFILNGRVIRHHGSQGEQRSFVLAVKMAEIEYLERLNGAPPVLLLDDISSELDPERNANLMTFLRGKRMQVFITTTDVSTLRLEGIDTHASFRVSRGTVTPV.

Gly-30–Thr-37 is a binding site for ATP.

It belongs to the RecF family.

Its subcellular location is the cytoplasm. The RecF protein is involved in DNA metabolism; it is required for DNA replication and normal SOS inducibility. RecF binds preferentially to single-stranded, linear DNA. It also seems to bind ATP. The sequence is that of DNA replication and repair protein RecF from Geobacter sulfurreducens (strain ATCC 51573 / DSM 12127 / PCA).